Reading from the N-terminus, the 179-residue chain is MSQVSGTDVPDLGRRQFMNLLTFGTITGVAAGALYPIVKYFIPPSAGGTGGGVTAKDALGNDVIVSQFLTSHNAGDRTLAQGLKGDPTYLVVQEDKTLANYGINAVCTHLGCVVPWNASEEKFMCPCHGSQYNAEGKVVRGPAPLSLALAHANVTDNDKVVFSTWTETDFRTGEEPWWS.

A helical membrane pass occupies residues 20-42 (LLTFGTITGVAAGALYPIVKYFI). One can recognise a Rieske domain in the interval 60–161 (GNDVIVSQFL…ANVTDNDKVV (102 aa)). Residues Cys107, His109, Cys125, and His128 each contribute to the [2Fe-2S] cluster site. Cys112 and Cys127 are oxidised to a cystine.

Belongs to the Rieske iron-sulfur protein family. The 4 large subunits of the cytochrome b6-f complex are cytochrome b6, subunit IV (17 kDa polypeptide, PetD), cytochrome f and the Rieske protein, while the 4 small subunits are PetG, PetL, PetM and PetN. The complex functions as a dimer. The cofactor is [2Fe-2S] cluster.

The protein resides in the cellular thylakoid membrane. It carries out the reaction 2 oxidized [plastocyanin] + a plastoquinol + 2 H(+)(in) = 2 reduced [plastocyanin] + a plastoquinone + 4 H(+)(out). In terms of biological role, component of the cytochrome b6-f complex, which mediates electron transfer between photosystem II (PSII) and photosystem I (PSI), cyclic electron flow around PSI, and state transitions. The polypeptide is Cytochrome b6-f complex iron-sulfur subunit (Microcystis aeruginosa (strain NIES-843 / IAM M-2473)).